Reading from the N-terminus, the 173-residue chain is Large ribosomal subunit protein uL10 (173 aa).

The protein belongs to the universal ribosomal protein uL10 family. As to quaternary structure, part of the ribosomal stalk of the 50S ribosomal subunit. The N-terminus interacts with L11 and the large rRNA to form the base of the stalk. The C-terminus forms an elongated spine to which L12 dimers bind in a sequential fashion forming a multimeric L10(L12)X complex.

Functionally, forms part of the ribosomal stalk, playing a central role in the interaction of the ribosome with GTP-bound translation factors. In Desulfatibacillum aliphaticivorans, this protein is Large ribosomal subunit protein uL10.